The sequence spans 571 residues: uncharacterized protein (571 aa).

Helical transmembrane passes span 5 to 27 (VILN…GYLV), 34 to 56 (TFVL…LNIT), 61 to 79 (IGSL…QGGA), 92 to 114 (LLAS…AWIF), 161 to 183 (TVGY…ATIF), 391 to 408 (FIFF…GLIS), 412 to 434 (FGIS…FGWI), 455 to 474 (LGLA…QAIT), 484 to 506 (FFLG…YYLL), 513 to 532 (VLLA…AALL), and 547 to 569 (SYAL…VTII).

The protein belongs to the AAE transporter (TC 2.A.81) family.

The protein resides in the cell membrane. This is an uncharacterized protein from Francisella tularensis subsp. tularensis (strain SCHU S4 / Schu 4).